A 397-amino-acid chain; its full sequence is Phosphoglycerate kinase (397 aa).

Residues 22 to 24 (DYN), arginine 38, 61 to 64 (HLGR), arginine 119, and arginine 152 contribute to the substrate site. ATP contacts are provided by residues lysine 203, glycine 294, glutamate 325, and 351 to 354 (GGDT).

Belongs to the phosphoglycerate kinase family. Monomer.

Its subcellular location is the cytoplasm. The catalysed reaction is (2R)-3-phosphoglycerate + ATP = (2R)-3-phospho-glyceroyl phosphate + ADP. It functions in the pathway carbohydrate degradation; glycolysis; pyruvate from D-glyceraldehyde 3-phosphate: step 2/5. The protein is Phosphoglycerate kinase (pgk) of Aquifex aeolicus (strain VF5).